The primary structure comprises 248 residues: 14-3-3 protein sigma (248 aa).

Residues Ser-5, Ser-74, and Ser-248 each carry the phosphoserine modification.

This sequence belongs to the 14-3-3 family. As to quaternary structure, homodimer. Interacts with KRT17 and SAMSN1. Found in a complex with XPO7, EIF4A1, ARHGAP1, VPS26A, VPS29 and VPS35. Interacts with GAB2. Interacts with SRPK2. Interacts with COPS6. Interacts with COP1; this interaction leads to proteasomal degradation. Interacts with the 'Thr-369' phosphorylated form of DAPK2. Interacts with PI4KB. Interacts with SLITRK1. Interacts with LRRK2; this interaction is dependent on LRRK2 phosphorylation. Interacts with PKP3 (via N-terminus); the interaction maintains the cytoplasmic pool of PKP3, facilitates PKP3 exchange at desmosomes and restricts PKP3 localization to existing desmosome cell junctions. Interacts with LCP2. Post-translationally, ubiquitinated. Ubiquitination by RFFL induces proteasomal degradation and indirectly regulates p53/TP53 activation.

The protein localises to the cytoplasm. It is found in the nucleus. Its subcellular location is the secreted. In terms of biological role, adapter protein implicated in the regulation of a large spectrum of both general and specialized signaling pathways. Binds to a large number of partners, usually by recognition of a phosphoserine or phosphothreonine motif. Binding generally results in the modulation of the activity of the binding partner. Promotes cytosolic retention of GBP1 GTPase by binding to phosphorylated GBP1, thereby inhibiting the innate immune response. Also acts as a TP53/p53-regulated inhibitor of G2/M progression. When bound to KRT17, regulates protein synthesis and epithelial cell growth by stimulating Akt/mTOR pathway. Acts to maintain desmosome cell junction adhesion in epithelial cells via interacting with and sequestering PKP3 to the cytoplasm, thereby restricting its translocation to existing desmosome structures and therefore maintaining desmosome protein homeostasis. Also acts to facilitate PKP3 exchange at desmosome plaques, thereby maintaining keratinocyte intercellular adhesion. May also regulate MDM2 autoubiquitination and degradation and thereby activate p53/TP53. In Bos taurus (Bovine), this protein is 14-3-3 protein sigma (SFN).